Consider the following 406-residue polypeptide: Nicotinate phosphoribosyltransferase (406 aa).

Position 225 is a phosphohistidine; by autocatalysis (His-225).

It belongs to the NAPRTase family. Transiently phosphorylated on a His residue during the reaction cycle. Phosphorylation strongly increases the affinity for substrates and increases the rate of nicotinate D-ribonucleotide production. Dephosphorylation regenerates the low-affinity form of the enzyme, leading to product release.

The catalysed reaction is nicotinate + 5-phospho-alpha-D-ribose 1-diphosphate + ATP + H2O = nicotinate beta-D-ribonucleotide + ADP + phosphate + diphosphate. Its pathway is cofactor biosynthesis; NAD(+) biosynthesis; nicotinate D-ribonucleotide from nicotinate: step 1/1. Functionally, catalyzes the synthesis of beta-nicotinate D-ribonucleotide from nicotinate and 5-phospho-D-ribose 1-phosphate at the expense of ATP. The protein is Nicotinate phosphoribosyltransferase of Psychromonas ingrahamii (strain DSM 17664 / CCUG 51855 / 37).